Consider the following 272-residue polypeptide: MKRTAFFISDGTGITAETLGQSLLAQFENITFTKLTRPYIDTAEKARAMVQQINNAAEKDGGRPIIFDTLVNQEIRDILAESNGFMIDIFSSFLAPLEHELMSRSSYSVGKSHSISHNTNYMERIEAVNFALDNDDGARTRYYDKADLILVGVSRCGKTPTCLYMAMQYGIRAANYPLTEDDMERLQLPSALKEYKDKLFGLTIDPDRLAAIRNERKPNSRYASFAQCEFEVREVENLFRRENINFINSTHFSVEEISAKILVEKGVERRLK.

152-159 (GVSRCGKT) lines the ADP pocket.

Belongs to the pyruvate, phosphate/water dikinase regulatory protein family. PSRP subfamily.

The enzyme catalyses [pyruvate, water dikinase] + ADP = [pyruvate, water dikinase]-phosphate + AMP + H(+). It catalyses the reaction [pyruvate, water dikinase]-phosphate + phosphate + H(+) = [pyruvate, water dikinase] + diphosphate. In terms of biological role, bifunctional serine/threonine kinase and phosphorylase involved in the regulation of the phosphoenolpyruvate synthase (PEPS) by catalyzing its phosphorylation/dephosphorylation. This chain is Putative phosphoenolpyruvate synthase regulatory protein, found in Stutzerimonas stutzeri (strain A1501) (Pseudomonas stutzeri).